Here is a 321-residue protein sequence, read N- to C-terminus: Peptide transport system permease protein SapB (321 aa).

Helical transmembrane passes span 8–28, 41–61, 82–102, 117–137, 150–170, 180–200, 249–269, and 289–309; these read HILW…VILL, IYIG…GITY, CFIT…ISAV, YVGL…VAAL, LLYE…FMEV, ILQH…MEII, VFTL…WPGI, and VIVI…FTFI. Residues 75–303 form the ABC transmembrane type-1 domain; the sequence is LPPTLELCFI…VCIILIDTFT (229 aa).

This sequence belongs to the binding-protein-dependent transport system permease family. OppBC subfamily.

The protein resides in the cell inner membrane. In terms of biological role, involved in a peptide intake transport system that plays a role in the resistance to antimicrobial peptides. The chain is Peptide transport system permease protein SapB (sapB) from Haemophilus influenzae (strain ATCC 51907 / DSM 11121 / KW20 / Rd).